A 139-amino-acid chain; its full sequence is Large-conductance mechanosensitive channel (139 aa).

2 helical membrane passes run 9–29 and 79–99; these read AFAV…GAAF and IQTV…VKAI.

It belongs to the MscL family. Homopentamer.

Its subcellular location is the cell inner membrane. In terms of biological role, channel that opens in response to stretch forces in the membrane lipid bilayer. May participate in the regulation of osmotic pressure changes within the cell. This Pseudomonas putida (strain ATCC 700007 / DSM 6899 / JCM 31910 / BCRC 17059 / LMG 24140 / F1) protein is Large-conductance mechanosensitive channel.